A 714-amino-acid chain; its full sequence is Structure-specific endonuclease subunit SLX4 1 (714 aa).

Composition is skewed to basic and acidic residues over residues methionine 1 to leucine 14 and isoleucine 24 to histidine 34. Disordered stretches follow at residues methionine 1 to isoleucine 116 and aspartate 337 to glutamine 369. Positions glutamine 36–serine 46 are enriched in low complexity. Basic residues predominate over residues lysine 79–lysine 92.

This sequence belongs to the SLX4 family. As to quaternary structure, forms a heterodimer with SLX1. In terms of processing, phosphorylated in response to DNA damage.

The protein resides in the nucleus. Functionally, regulatory subunit of the SLX1-SLX4 structure-specific endonuclease that resolves DNA secondary structures generated during DNA repair and recombination. Has endonuclease activity towards branched DNA substrates, introducing single-strand cuts in duplex DNA close to junctions with ss-DNA. This Candida tropicalis (strain ATCC MYA-3404 / T1) (Yeast) protein is Structure-specific endonuclease subunit SLX4 1.